We begin with the raw amino-acid sequence, 409 residues long: S-adenosylmethionine synthase (409 aa).

An ATP-binding site is contributed by histidine 15. Aspartate 17 contributes to the Mg(2+) binding site. Residue glutamate 43 participates in K(+) binding. L-methionine-binding residues include glutamate 56 and glutamine 100. The segment at 100–110 (QSSDIAQGVNE) is flexible loop. ATP is bound by residues 171–173 (DGK), 248–249 (KF), aspartate 257, 263–264 (RK), alanine 280, and lysine 284. Residue aspartate 257 coordinates L-methionine. Lysine 288 provides a ligand contact to L-methionine.

The protein belongs to the AdoMet synthase family. In terms of assembly, homotetramer; dimer of dimers. It depends on Mg(2+) as a cofactor. Requires K(+) as cofactor.

The protein resides in the cytoplasm. The catalysed reaction is L-methionine + ATP + H2O = S-adenosyl-L-methionine + phosphate + diphosphate. The protein operates within amino-acid biosynthesis; S-adenosyl-L-methionine biosynthesis; S-adenosyl-L-methionine from L-methionine: step 1/1. Functionally, catalyzes the formation of S-adenosylmethionine (AdoMet) from methionine and ATP. The overall synthetic reaction is composed of two sequential steps, AdoMet formation and the subsequent tripolyphosphate hydrolysis which occurs prior to release of AdoMet from the enzyme. This Prochlorococcus marinus (strain NATL1A) protein is S-adenosylmethionine synthase.